The chain runs to 193 residues: Epididymal-specific lipocalin-12 (193 aa).

Positions 1–19 (MGPWWALWLILTLPQILES) are cleaved as a signal peptide. Cysteine 88 and cysteine 193 are joined by a disulfide. Residues asparagine 143 and asparagine 172 are each glycosylated (N-linked (GlcNAc...) asparagine).

This sequence belongs to the calycin superfamily. Lipocalin family. In terms of assembly, monomer. As to expression, expressed in epididymis.

The protein resides in the secreted. Functionally, binds all-trans retinoic acid and may act as a retinoid carrier protein within the epididymis. May play a role in male fertility. The polypeptide is Epididymal-specific lipocalin-12 (Lcn12) (Mus musculus (Mouse)).